The following is a 751-amino-acid chain: Ribosomal RNA large subunit methyltransferase K/L (751 aa).

In terms of domain architecture, THUMP spans 44–155; sequence LAYRTCLWSR…KNKLVLSIDL (112 aa).

Belongs to the methyltransferase superfamily. RlmKL family.

The protein resides in the cytoplasm. It catalyses the reaction guanosine(2445) in 23S rRNA + S-adenosyl-L-methionine = N(2)-methylguanosine(2445) in 23S rRNA + S-adenosyl-L-homocysteine + H(+). The catalysed reaction is guanosine(2069) in 23S rRNA + S-adenosyl-L-methionine = N(2)-methylguanosine(2069) in 23S rRNA + S-adenosyl-L-homocysteine + H(+). Specifically methylates the guanine in position 2445 (m2G2445) and the guanine in position 2069 (m7G2069) of 23S rRNA. The chain is Ribosomal RNA large subunit methyltransferase K/L from Cellvibrio japonicus (strain Ueda107) (Pseudomonas fluorescens subsp. cellulosa).